We begin with the raw amino-acid sequence, 131 residues long: D-ribose pyranase (131 aa).

Residue His-20 is the Proton donor of the active site. Substrate is bound by residues Asp-28, His-98, and 120-122; that span reads YAN.

It belongs to the RbsD / FucU family. RbsD subfamily. Homodecamer.

The protein resides in the cytoplasm. The catalysed reaction is beta-D-ribopyranose = beta-D-ribofuranose. The protein operates within carbohydrate metabolism; D-ribose degradation; D-ribose 5-phosphate from beta-D-ribopyranose: step 1/2. Functionally, catalyzes the interconversion of beta-pyran and beta-furan forms of D-ribose. This chain is D-ribose pyranase, found in Laribacter hongkongensis (strain HLHK9).